A 47-amino-acid chain; its full sequence is Defensin Tk-AMP-D1.1 (47 aa).

4 disulfides stabilise this stretch: C3–C47, C14–C34, C20–C41, and C24–C43.

Plant defense peptide. The chain is Defensin Tk-AMP-D1.1 from Triticum kiharae (Wheat).